The following is a 273-amino-acid chain: HMP-PP phosphatase (273 aa).

Asp-8 serves as the catalytic Nucleophile. Mg(2+)-binding residues include Asp-8, Asp-10, and Asp-212.

It belongs to the HAD-like hydrolase superfamily. Cof family. It depends on Mg(2+) as a cofactor.

It catalyses the reaction 4-amino-2-methyl-5-(diphosphooxymethyl)pyrimidine + H2O = 4-amino-2-methyl-5-(phosphooxymethyl)pyrimidine + phosphate + H(+). In terms of biological role, catalyzes the hydrolysis of 4-amino-2-methyl-5-hydroxymethylpyrimidine pyrophosphate (HMP-PP) to 4-amino-2-methyl-5-hydroxymethylpyrimidine phosphate (HMP-P). This is HMP-PP phosphatase from Yersinia pseudotuberculosis serotype I (strain IP32953).